Reading from the N-terminus, the 158-residue chain is Protein Smg homolog (158 aa).

Belongs to the Smg family.

In Pseudoalteromonas atlantica (strain T6c / ATCC BAA-1087), this protein is Protein Smg homolog.